A 605-amino-acid chain; its full sequence is Insulin-like growth factor-binding protein complex acid labile subunit (605 aa).

An N-terminal signal peptide occupies residues 1–27 (MALRKGGLALALLLLSWVALGPRSLEG). The 43-residue stretch at 32 to 74 (TPGEAEGPACPATCACSYDDEVNELSVFCSSRNLTRLPDGIPG) folds into the LRRNT domain. Disulfide bonds link Cys41/Cys47 and Cys45/Cys60. Asn64, Asn85, and Asn96 each carry an N-linked (GlcNAc...) asparagine glycan. LRR repeat units lie at residues 75-96 (GTQA…AFRN), 99-120 (SLAF…ALLG), 123-144 (NLCH…TFAY), 147-168 (ALAL…LFEG), 171-192 (NLWD…AFRG), 195-216 (GLRE…LFSG), 219-240 (ELRE…VFAQ), 243-264 (RLQK…AFLG), 267-288 (ALRW…TFPG), 291-312 (GLRV…TFED), 315-336 (FLEE…SFEG), 339-360 (QLEV…AFLG), 363-384 (NVAV…VFRG), 387-408 (KLHS…TFAG), 411-432 (GLRR…SLWG), 435-456 (ELLE…LFQG), 459-480 (KLEY…ALGP), 483-504 (RAFW…LLAS), and 507-528 (RLRY…PPGL). A glycan (N-linked (GlcNAc...) asparagine) is linked at Asn368. N-linked (GlcNAc...) asparagine glycosylation is present at Asn515. The LRRCT domain occupies 536–605 (NPWDCSCPLK…DLGEAHFAPC (70 aa)). 3 disulfides stabilise this stretch: Cys540-Cys583, Cys542-Cys605, and Cys566-Cys571. N-linked (GlcNAc...) asparagine glycosylation is present at Asn580.

Forms a ternary complex with IGF1 and IGFBP3.

It is found in the secreted. The protein localises to the extracellular space. Its function is as follows. Involved in protein-protein interactions that result in protein complexes, receptor-ligand binding or cell adhesion. The chain is Insulin-like growth factor-binding protein complex acid labile subunit (IGFALS) from Papio hamadryas (Hamadryas baboon).